The sequence spans 326 residues: N-acetyl-gamma-glutamyl-phosphate reductase (326 aa).

Cysteine 155 is a catalytic residue.

It belongs to the NAGSA dehydrogenase family. Type 1 subfamily.

The protein localises to the cytoplasm. It catalyses the reaction N-acetyl-L-glutamate 5-semialdehyde + phosphate + NADP(+) = N-acetyl-L-glutamyl 5-phosphate + NADPH + H(+). The protein operates within amino-acid biosynthesis; L-arginine biosynthesis; N(2)-acetyl-L-ornithine from L-glutamate: step 3/4. In terms of biological role, catalyzes the NADPH-dependent reduction of N-acetyl-5-glutamyl phosphate to yield N-acetyl-L-glutamate 5-semialdehyde. This is N-acetyl-gamma-glutamyl-phosphate reductase from Shewanella frigidimarina (strain NCIMB 400).